Reading from the N-terminus, the 203-residue chain is GTP-binding protein yptV1 (203 aa).

GTP-binding positions include 15–23 (GDSGVGKSC), 33–40 (YTESYIST), 63–67 (DTAGQ), 121–124 (NKSD), and 151–153 (SAK). Positions 37 to 45 (YISTIGVDF) match the Effector region motif. Residues 173-203 (MASQPVPPKPGGPVVRPTEGKPINNKSSSCC) form a disordered region. S-geranylgeranyl cysteine attachment occurs at residues cysteine 202 and cysteine 203.

It belongs to the small GTPase superfamily. Rab family.

The protein localises to the cell membrane. Functionally, protein transport. Probably involved in vesicular traffic. The sequence is that of GTP-binding protein yptV1 (YPTV1) from Volvox carteri (Green alga).